The sequence spans 163 residues: Probable calcium-binding protein CML26 (163 aa).

A2 carries the post-translational modification N-acetylalanine. EF-hand domains follow at residues 16–51 (STDMELKKVFDKFDANGDGKISVSELGNVFKSMGTS), 52–82 (YTEEELNRVLDEIDIDCDGFINQEEFATICR), 85–120 (SSAVEIREAFDLYDQNKNGLISSSEIHKVLNRLGMT), and 121–156 (CSVEDCVRMIGHVDTDGDGNVNFEEFQKMMSSPELV). The Ca(2+) site is built by D29, N31, D33, K35, E40, D65, D67, D69, E76, D98, N100, N102, E109, D134, D136, D138, N140, and E145.

In terms of biological role, potential calcium sensor. This chain is Probable calcium-binding protein CML26 (CML26), found in Arabidopsis thaliana (Mouse-ear cress).